Reading from the N-terminus, the 392-residue chain is Cytochrome b (392 aa).

A run of 4 helical transmembrane segments spans residues 38 to 58, 82 to 104, 119 to 139, and 185 to 205; these read FGSLAGICLVIQIVTGVFLAM, WLLRYMHANGASMFLIVVHLHIF, VRCLGVVIFLLMIVTAFTGYV, and FFSLHHLLPFILVGASLLHLA. His-88 and His-102 together coordinate heme b. The heme b site is built by His-189 and His-203. His-208 is an a ubiquinone binding site. 4 consecutive transmembrane segments (helical) span residues 231–251, 295–315, 327–347, and 354–373; these read FYVKDLVGWVAFAIFFSIWIF, SGGVAAIAPVFICLLALPFFK, IHQGIFWLLLADRLLLGWIGC, and FVTIGQIPPFVFFLFFAITP.

This sequence belongs to the cytochrome b family. The main subunits of complex b-c1 are: cytochrome b, cytochrome c1 and the Rieske protein. It depends on heme b as a cofactor.

It localises to the mitochondrion inner membrane. In terms of biological role, component of the ubiquinol-cytochrome c reductase complex (complex III or cytochrome b-c1 complex) that is part of the mitochondrial respiratory chain. The b-c1 complex mediates electron transfer from ubiquinol to cytochrome c. Contributes to the generation of a proton gradient across the mitochondrial membrane that is then used for ATP synthesis. In Vicia faba (Broad bean), this protein is Cytochrome b (MT-CYB).